Reading from the N-terminus, the 346-residue chain is Very-long-chain 3-oxoacyl-CoA reductase (346 aa).

Residues 26–46 traverse the membrane as a helical segment; that stretch reads TASVLLVAGGWFVVSRVWTFL. Residues isoleucine 71, aspartate 126, aspartate 134, asparagine 153, tyrosine 220, lysine 224, isoleucine 253, and serine 255 each coordinate NADP(+). Tyrosine 220 functions as the Proton donor in the catalytic mechanism. Lysine 224 functions as the Lowers pKa of active site Tyr in the catalytic mechanism.

This sequence belongs to the short-chain dehydrogenases/reductases (SDR) family.

It is found in the endoplasmic reticulum membrane. It carries out the reaction a very-long-chain (3R)-3-hydroxyacyl-CoA + NADP(+) = a very-long-chain 3-oxoacyl-CoA + NADPH + H(+). It functions in the pathway lipid metabolism; fatty acid biosynthesis. Functionally, component of the microsomal membrane bound fatty acid elongation system, which produces the 26-carbon very long-chain fatty acids (VLCFA) from palmitate. Catalyzes the reduction of the 3-ketoacyl-CoA intermediate that is formed in each cycle of fatty acid elongation. VLCFAs serve as precursors for ceramide and sphingolipids. The protein is Very-long-chain 3-oxoacyl-CoA reductase of Emericella nidulans (strain FGSC A4 / ATCC 38163 / CBS 112.46 / NRRL 194 / M139) (Aspergillus nidulans).